Reading from the N-terminus, the 557-residue chain is MRSDMIKKGFDKAPHRSLLKATGLKDEDFDKPFIAICNSFIEIIPGHKHLNEFGKLVKEAVRAAGMVPFEFNTIGVDDGIAMGHIGMRYSLPSREIIADSVETVVNAHWFDGMICIPNCDKITPGMMMAALRINIPTVFVSGGPMAAGKTSKGDVVDLSSVFEGVGAYQSGKISEEELKDIEDHGCPSCGSCSGMFTANSMNCLCEVLGLALPGNGSILAIDPRREELIKQAAEKLKILIERDIKPRDIVTEEAIDDAFALDMAMGGSTNTVLHTLALAQEAGLDYDMNRIDAVSRRVPHLCKVSPASNWHMEDIDRAGGISAILKEMSRKEGVLHLDRITATGQTLRENIAHAEIKDKEVIHSLENPHSEEGGLRILKGNLAKDGAVIKSGATEVKRFEGPCVIFNSQDEALAGIMLGKVKKGDVVVIRYEGPRGGPGMPEMLAPTSAIAGMGLGADVALLTDGRFSGASRGISVGHISPEAAAGGTIALLEQGDIVCIDVEERLLEVRVSDEELGKRKKEWKRPEPKVKTGWLGRYAQMVTSANTGAVLKIPNFD.

Residue Asp78 coordinates Mg(2+). Position 119 (Cys119) interacts with [2Fe-2S] cluster. 2 residues coordinate Mg(2+): Asp120 and Lys121. The residue at position 121 (Lys121) is an N6-carboxylysine. Cys192 provides a ligand contact to [2Fe-2S] cluster. Position 442 (Glu442) interacts with Mg(2+). Ser468 serves as the catalytic Proton acceptor.

This sequence belongs to the IlvD/Edd family. As to quaternary structure, homodimer. The cofactor is [2Fe-2S] cluster. Requires Mg(2+) as cofactor.

It catalyses the reaction (2R)-2,3-dihydroxy-3-methylbutanoate = 3-methyl-2-oxobutanoate + H2O. It carries out the reaction (2R,3R)-2,3-dihydroxy-3-methylpentanoate = (S)-3-methyl-2-oxopentanoate + H2O. Its pathway is amino-acid biosynthesis; L-isoleucine biosynthesis; L-isoleucine from 2-oxobutanoate: step 3/4. The protein operates within amino-acid biosynthesis; L-valine biosynthesis; L-valine from pyruvate: step 3/4. Functions in the biosynthesis of branched-chain amino acids. Catalyzes the dehydration of (2R,3R)-2,3-dihydroxy-3-methylpentanoate (2,3-dihydroxy-3-methylvalerate) into 2-oxo-3-methylpentanoate (2-oxo-3-methylvalerate) and of (2R)-2,3-dihydroxy-3-methylbutanoate (2,3-dihydroxyisovalerate) into 2-oxo-3-methylbutanoate (2-oxoisovalerate), the penultimate precursor to L-isoleucine and L-valine, respectively. This chain is Dihydroxy-acid dehydratase, found in Bacillus anthracis (strain A0248).